The following is a 334-amino-acid chain: MSLDIDQIALHQLIKRDEQTLDVVLRDSLLPTNAVVEEMMAELHRVYSAKSKAYGLFNEQSELADALKRSRKGDEDFLSFSRAATGRLRDELAKYPFAEGGVVLFCQYRYLAVEYLLISVLSSCHSMRVNEQLDLSTTHYLDINRADIVARIDLTEWETNPESTRYLTFLKGRVGRKVSDFFMDFLSAAEGLDTKAQNRGLLQAVDDYCADAELGKNERQAYRQQVYSYCNEQLQAGEEIALQVLAQELPKLGEKDFQQFSAEQGYALEESFPADRGTLRQLTKFAGSGGGLSINFDALLLDERIFWDAATDTLTIKGTPPNLRDQLQRRAGSK.

It belongs to the YejK family.

Its subcellular location is the cytoplasm. It is found in the nucleoid. This is Nucleoid-associated protein YpsIP31758_2721 from Yersinia pseudotuberculosis serotype O:1b (strain IP 31758).